The primary structure comprises 332 residues: Melanocortin receptor 4 (332 aa).

At 1 to 43 (MNSTHHHGMHTSLHFWNRSTYGLHSNASEPLGKGYSEGGCYEQ) the chain is on the extracellular side. N2, N17, and N26 each carry an N-linked (GlcNAc...) asparagine glycan. Cystine bridges form between C40–C279 and C271–C277. A helical transmembrane segment spans residues 44 to 69 (LFVSPEVFVTLGVISLLENILVIVAI). At 70–81 (AKNKNLHSPMYF) the chain is on the cytoplasmic side. Residues 82–106 (FICSLAVADMLVSVSNGSETIVITL) traverse the membrane as a helical segment. Ca(2+) contacts are provided by E100, D122, and D126. The Extracellular segment spans residues 107–123 (LNSTDTDAQSFTVNIDN). Residues 124–145 (VIDSVICSSLLASICSLLSIAV) form a helical membrane-spanning segment. Topologically, residues 146–165 (DRYFTIFYALQYHNIMTVKR) are cytoplasmic. A helical membrane pass occupies residues 166–186 (VGIIISCIWAVCTVSGVLFII). Residues 187–191 (YSDSS) are Extracellular-facing. The helical transmembrane segment at 192–215 (AVIICLITVFFTMLALMASLYVHM) threads the bilayer. Residues 216 to 248 (FLMARLHIKRIAVLPGTGTIRQGANMKGAITLT) are Cytoplasmic-facing. A helical membrane pass occupies residues 249 to 271 (ILIGVFVVCWAPFFLHLIFYISC). Over 272–280 (PQNPYCVCF) the chain is Extracellular. The chain crosses the membrane as a helical span at residues 281 to 304 (MSHFNLYLILIMCNSIIDPLIYAL). Topologically, residues 305–332 (RSQELRKTFKEIICCYPLGGLCDLSSRY) are cytoplasmic. The S-palmitoyl cysteine moiety is linked to residue C318.

This sequence belongs to the G-protein coupled receptor 1 family. Homodimer; disulfide-linked, also forms higher order oligomers. Interacts with GNAS. Interacts with ATRNL1. Interacts with MGRN1; this interaction competes with GNAS-binding and thus inhibits agonist-induced cAMP production. Interacts with MRAP and MRAP2; these associated factors increase ligand-sensitivity and generation of cAMP.

Its subcellular location is the cell membrane. In terms of biological role, hormone receptor that acts as a key component of the leptin-melanocortin pathway at the intersection of homeostatic maintenance of energetic state. Plays a role in regulating food intake: activation by a stimulating hormone such as anorexigenic alpha-melanocyte stimulating hormone (alpha-MSH) inhibits appetite, whereas binding to a natural antagonist like Agouti-related protein/AGRP promotes appetite. G-protein-coupled receptor that activates conventional Galphas signaling leading to induction of anorexogenic signaling in the hypothalamus to result in negative energy balance. Regulates the firing activity of neurons from the hypothalamus by alpha-MSH and AGRP independently of Galphas signaling by ligand-induced coupling of closure of inwardly rectifying potassium channel KCNJ13. In intestinal epithelial cells, plays a role in the inhibition of hepatic glucose production via nesfatin-1/NUCB2 leading to increased cyclic adenosine monophosphate (cAMP) levels and glucagon-like peptide 1 (GLP-1) secretion in the intestinal epithelium. The polypeptide is Melanocortin receptor 4 (MC4R) (Sus scrofa (Pig)).